The sequence spans 287 residues: uncharacterized protein (287 aa).

Residues 115-287 (PQNFDREWNP…NLAIELLKAI (173 aa)) form the ATP-grasp domain. ATP contacts are provided by residues Lys145 and 178–188 (QKYITCSKGES). Asp248, Glu261, and Asn263 together coordinate Mg(2+). Mn(2+)-binding residues include Asp248, Glu261, and Asn263.

It belongs to the RimK family.

This is an uncharacterized protein from Mycoplasma genitalium (strain ATCC 33530 / DSM 19775 / NCTC 10195 / G37) (Mycoplasmoides genitalium).